Reading from the N-terminus, the 430-residue chain is MYCALVTATDSITTKLLNAFRPRTSAPSTATVLRSVLWPIAILSVIHRSYVLGTNGYITDDFGPVYRAVINFKLGLDIYNEQFDHVDPHYLYPPGGTLLLAPFGYLPVDASRYWYISFNVLAFLIAAYLMLRIFDYTLSSVAAPALVLAMFCTESVTNTLVFTNINGCMLLGAVLFFRWLLKGGRNAELLAGAAIGLTLVVKPSLAPLLLLPVLNRQFYTLITAFGVPLVFNIAAWPLVPDPMNFVRHTVPYIMSTRDYFNSSIVGNGIYYGLPMWLILLLRVVFLLLAVGSLWLLYRYYRERDPRFWLLTSSGVLLTASFLLLSLGQGYYSTMLFPFLMTVVLPNSVLRNWPAWLAIYGFMTMDRWLLGHWPTTGRFLEYMKITYGWSLMLVVVFCVLYFRYLDAKQDGRLDQGIDPPWMARERTPAPV.

10 helical membrane-spanning segments follow: residues 26-46 (APST…LSVI), 114-134 (WYIS…LRIF), 136-156 (YTLS…TESV), 160-180 (LVFT…FRWL), 194-214 (AIGL…LPVL), 218-238 (FYTL…AWPL), 276-296 (WLIL…LWLL), 307-327 (FWLL…LSLG), 352-372 (WPAW…LGHW), and 381-401 (YMKI…VLYF).

The protein belongs to the glycosyltransferase 87 family.

Its subcellular location is the cell membrane. The catalysed reaction is Adds an alpha-D-arabinofuranosyl group from trans,octacis-decaprenylphospho-beta-D-arabinofuranose at the 3-O-position of an alpha-(1-&gt;5)-arabinofuranan chain attached to a beta-(1-&gt;5)-galactofuranan chain.. It functions in the pathway cell wall biogenesis; cell wall polysaccharide biosynthesis. Its function is as follows. Involved in the biosynthesis of the arabinogalactan (AG) region of the mycolylarabinogalactan-peptidoglycan (mAGP) complex, an essential component of the mycobacterial cell wall. Catalyzes the addition of an arabinofuranosyl (Araf) residue from the sugar donor beta-D-arabinofuranosyl-1-monophosphoryldecaprenol (DPA) on the C-3 of an alpha-(1-&gt;5)-linked Araf from the arabinan backbone of AG. This chain is Alpha-(1-&gt;3)-arabinofuranosyltransferase (aftC), found in Mycolicibacterium smegmatis (strain ATCC 700084 / mc(2)155) (Mycobacterium smegmatis).